The primary structure comprises 479 residues: MGQAATHDANNYTSINYTEIYDVIEDEKDVCAVADEPNIPCSFGISLAVPEWEAICTAIILTMIIISTVVGNILVILSVFTYKPLRIVQNFFIVSLAVADLTVAILVLPLNVAYSILGQWVFGIYVCKMWLTCDIMCCTSSILNLCAIALDRYWAITDPINYAQKRTLERVLFMIGIVWILSLVISSPPLLGWNDWPEVFEPDTPCRLTSQPGFVIFSSSGSFYIPLVIMTVVYFEIYLATKKRLRDRAKATKISTISSGRNKYETKESDPNDQDSVSSDANPNEHQGGTRLVAENEKKHRTRKLTPKKKPKRRYWSKDDKSHNKLIIPILSNENSVTDIGENLENRNTSSESNSKETHEDNMIEITEAAPVKIQKRPKQNQTNAVYQFIEEKQRISLTRERRAARTLGIIMGVFVVCWLPFFVIYLVIPFCVSCCLSNKFINFITWLGYVNSALNPLIYTIFNMDFRRAFKKLLFIKC.

At 1–57 the chain is on the extracellular side; sequence MGQAATHDANNYTSINYTEIYDVIEDEKDVCAVADEPNIPCSFGISLAVPEWEAICT. N-linked (GlcNAc...) asparagine glycosylation is found at N11 and N16. A helical transmembrane segment spans residues 58–80; it reads AIILTMIIISTVVGNILVILSVF. Residues 81–90 are Cytoplasmic-facing; sequence TYKPLRIVQN. Residues 91–112 form a helical membrane-spanning segment; that stretch reads FFIVSLAVADLTVAILVLPLNV. Residues 113–129 lie on the Extracellular side of the membrane; it reads AYSILGQWVFGIYVCKM. A helical transmembrane segment spans residues 130–150; it reads WLTCDIMCCTSSILNLCAIAL. Over 151-170 the chain is Cytoplasmic; the sequence is DRYWAITDPINYAQKRTLER. Residues 171–193 traverse the membrane as a helical segment; the sequence is VLFMIGIVWILSLVISSPPLLGW. Residues 194–218 are Extracellular-facing; that stretch reads NDWPEVFEPDTPCRLTSQPGFVIFS. Residues 219 to 240 form a helical membrane-spanning segment; it reads SSGSFYIPLVIMTVVYFEIYLA. The Cytoplasmic segment spans residues 241-407; the sequence is TKKRLRDRAK…LTRERRAART (167 aa). The tract at residues 260–319 is disordered; the sequence is GRNKYETKESDPNDQDSVSSDANPNEHQGGTRLVAENEKKHRTRKLTPKKKPKRRYWSKD. Positions 274–287 are enriched in polar residues; sequence QDSVSSDANPNEHQ. Basic residues predominate over residues 299 to 315; the sequence is KHRTRKLTPKKKPKRRY. Residues 408–429 form a helical membrane-spanning segment; sequence LGIIMGVFVVCWLPFFVIYLVI. Residues 430-441 lie on the Extracellular side of the membrane; that stretch reads PFCVSCCLSNKF. The chain crosses the membrane as a helical span at residues 442-462; sequence INFITWLGYVNSALNPLIYTI. The Cytoplasmic portion of the chain corresponds to 463–479; the sequence is FNMDFRRAFKKLLFIKC.

It belongs to the G-protein coupled receptor 1 family.

The protein localises to the cell membrane. Functionally, receptor for octopamine. Octopamine (OA) is a neurotransmitter, neurohormone, and neuromodulator in invertebrates. The activity of this receptor is mediated by G proteins which activate adenylyl cyclase. The sequence is that of Octopamine receptor from Bombyx mori (Silk moth).